Reading from the N-terminus, the 85-residue chain is Large ribosomal subunit protein bL27 (85 aa).

The disordered stretch occupies residues 1-21 (MAHKKAGGSTRNGRDSESKRL).

Belongs to the bacterial ribosomal protein bL27 family.

The polypeptide is Large ribosomal subunit protein bL27 (Pseudomonas entomophila (strain L48)).